Here is a 452-residue protein sequence, read N- to C-terminus: Zinc finger protein GAI-ASSOCIATED FACTOR 1 (452 aa).

The segment covering 1–32 (MPVDLDNSSTVSGEASVSISSTGNQNPLPNST) has biased composition (polar residues). A disordered region spans residues 1 to 47 (MPVDLDNSSTVSGEASVSISSTGNQNPLPNSTGKKKRNLPGMPDPES). Ser-53 is subject to Phosphoserine. C2H2-type zinc fingers lie at residues 63–85 (FVCE…RRGH) and 104–134 (YVCP…CRKH). The short motif at 126-133 (IKKHFCRK) is the Nuclear localization signal element. A C2H2-type 2; degenerate zinc finger spans residues 139–162 (WKCDKCSKKYAVQSDWKAHSKICG). Zn(2+)-binding residues include Cys-141, Cys-144, His-157, Cys-161, Cys-168, Cys-170, His-183, and Cys-187. Residues 166 to 189 (YKCDCGTLFSRRDSFITHRAFCDA) form a CCHC-type 2; atypical zinc finger. Residues 176-188 (RRDSFITHRAFCD) are SHR-binding. The tract at residues 196 to 254 (RSHHSQSKKQNPEILTRKNPVPNPVPAPVDTESAKIKSSSTLTIKQSESPKTPPEIVQE) is disordered. The segment covering 231-245 (IKSSSTLTIKQSESP) has biased composition (polar residues).

In terms of assembly, interacts with the DELLA proteins (e.g. GAI/RGA2, RGA, RGL1, RGL2 and RGLG3), acting as coactivators and with TPR1 and TPR4, acting as a corepressors, at the promoter of GA20OX2 gene. In terms of tissue distribution, observed in vegetative tissues. Mainly expressed in hypocotyls, petioles, shoot apices, root tips, and trichomes, and, at low levels, in leaves, stems and flowers.

It is found in the nucleus. With respect to regulation, transcription activation is repressed by gibberellic acid GA(3) in the presence of TPR4. Functionally, transcription factor that acts as a positive regulator of gibberellin (GA) action, homeostasis and signaling. GA converts the GAF1 complex from transcriptional activator to repressor via the degradation of DELLA proteins. The sequence is that of Zinc finger protein GAI-ASSOCIATED FACTOR 1 from Arabidopsis thaliana (Mouse-ear cress).